The primary structure comprises 239 residues: Type II restriction enzyme Eco47II (239 aa).

It catalyses the reaction Endonucleolytic cleavage of DNA to give specific double-stranded fragments with terminal 5'-phosphates.. Its function is as follows. A P subtype restriction enzyme that recognizes the double-stranded sequence 5'-GGNCC-3'; the cleavage site is unknown. In Escherichia coli, this protein is Type II restriction enzyme Eco47II.